Reading from the N-terminus, the 41-residue chain is Large ribosomal subunit protein bL36 (41 aa).

The protein belongs to the bacterial ribosomal protein bL36 family.

In Sinorhizobium fredii (strain NBRC 101917 / NGR234), this protein is Large ribosomal subunit protein bL36.